The sequence spans 485 residues: Glycogen synthase (485 aa).

Lys-15 contacts ADP-alpha-D-glucose.

This sequence belongs to the glycosyltransferase 1 family. Bacterial/plant glycogen synthase subfamily.

It carries out the reaction [(1-&gt;4)-alpha-D-glucosyl](n) + ADP-alpha-D-glucose = [(1-&gt;4)-alpha-D-glucosyl](n+1) + ADP + H(+). Its pathway is glycan biosynthesis; glycogen biosynthesis. Its function is as follows. Synthesizes alpha-1,4-glucan chains using ADP-glucose. The polypeptide is Glycogen synthase (Fervidobacterium nodosum (strain ATCC 35602 / DSM 5306 / Rt17-B1)).